The following is a 597-amino-acid chain: Lysine--tRNA ligase (597 aa).

Mg(2+) is bound by residues Glu501 and Glu508.

Belongs to the class-II aminoacyl-tRNA synthetase family. Homodimer. Mg(2+) serves as cofactor.

Its subcellular location is the cytoplasm. It carries out the reaction tRNA(Lys) + L-lysine + ATP = L-lysyl-tRNA(Lys) + AMP + diphosphate. This chain is Lysine--tRNA ligase (lysS), found in Aquifex aeolicus (strain VF5).